The following is a 266-amino-acid chain: Thymidylate synthase (266 aa).

Position 24 (Arg24) interacts with dUMP. Residue His54 coordinates (6R)-5,10-methylene-5,6,7,8-tetrahydrofolate. 129-130 (RR) is a binding site for dUMP. Cys149 (nucleophile) is an active-site residue. DUMP-binding positions include 169–172 (RSAD), Asn180, and 210–212 (HIY). (6R)-5,10-methylene-5,6,7,8-tetrahydrofolate is bound at residue Asp172. Ala265 is a (6R)-5,10-methylene-5,6,7,8-tetrahydrofolate binding site.

The protein belongs to the thymidylate synthase family. Bacterial-type ThyA subfamily. In terms of assembly, homodimer.

Its subcellular location is the cytoplasm. It carries out the reaction dUMP + (6R)-5,10-methylene-5,6,7,8-tetrahydrofolate = 7,8-dihydrofolate + dTMP. The protein operates within pyrimidine metabolism; dTTP biosynthesis. Its function is as follows. Catalyzes the reductive methylation of 2'-deoxyuridine-5'-monophosphate (dUMP) to 2'-deoxythymidine-5'-monophosphate (dTMP) while utilizing 5,10-methylenetetrahydrofolate (mTHF) as the methyl donor and reductant in the reaction, yielding dihydrofolate (DHF) as a by-product. This enzymatic reaction provides an intracellular de novo source of dTMP, an essential precursor for DNA biosynthesis. This is Thymidylate synthase from Nocardia farcinica (strain IFM 10152).